Consider the following 393-residue polypeptide: Cytochrome b (393 aa).

The Mitochondrial matrix segment spans residues 1–33 (MTIRNQRFSLLKQPISSTLNQHLVDYPTPSNLS). The chain crosses the membrane as a helical span at residues 34–57 (YWWGFGSLAGICLVIQIVTGVFLA). Over 58-80 (MHYTPHVDLAFNSVEHIMRDVEG) the chain is Mitochondrial intermembrane. Residues 81 to 108 (GWLLRYMHANGASMFFIVVYLHIFRGLY) form a helical membrane-spanning segment. His-88 and His-102 together coordinate heme b. The Mitochondrial matrix portion of the chain corresponds to 109-116 (YASYSSPR). Residues 117-141 (EFVWCLGVVIFLLMIVTAFIGYVLP) traverse the membrane as a helical segment. Residues 142 to 178 (WGQMSFWGATVITSLASAIPVVGDTIVTWLWGGFSVD) lie on the Mitochondrial intermembrane side of the membrane. A helical membrane pass occupies residues 179–210 (NATLNRFFSLHYLLPFILVGASLLHLAALHQY). Residues His-189 and His-203 each contribute to the heme b site. His-208 lines the a ubiquinone pocket. The Mitochondrial matrix segment spans residues 211 to 229 (GSNNPLGVHSEMDKIAFYP). Residues 230–252 (YFYVKDLVGWVAFAIFFSIWIFY) traverse the membrane as a helical segment. Topologically, residues 253-293 (APNVLGHPDNYIPANPMSTPPHIVPEWYFLPIYAILRSIPD) are mitochondrial intermembrane. Residues 294–314 (KAGGVAAIALVFICLLALPFF) traverse the membrane as a helical segment. At 315-325 (KSMYVRSSSFR) the chain is on the mitochondrial matrix side. A helical transmembrane segment spans residues 326–346 (PIYQGMFWLLLADCLLLGWIG). Residues 347–353 (CQPVEAP) lie on the Mitochondrial intermembrane side of the membrane. A helical transmembrane segment spans residues 354-370 (FVTIGQISSLVFFLFFA). Residues 371–393 (ITPILGRVGRGIPNSYTDETDHT) are Mitochondrial matrix-facing.

Belongs to the cytochrome b family. As to quaternary structure, component of the ubiquinol-cytochrome c oxidoreductase (cytochrome b-c1 complex, complex III, CIII), a multisubunit enzyme composed of 10 subunits. The complex is composed of 3 respiratory subunits cytochrome b (MT-CYB), cytochrome c1 (CYC1-1 or CYC1-2) and Rieske protein (UCR1-1 or UCR1-2), 2 core protein subunits MPPalpha1 (or MPPalpha2) and MPPB, and 5 low-molecular weight protein subunits QCR7-1 (or QCR7-2), UCRQ-1 (or UCRQ-2), QCR9, UCRY and probably QCR6-1 (or QCR6-2). The complex exists as an obligatory dimer and forms supercomplexes (SCs) in the inner mitochondrial membrane with NADH-ubiquinone oxidoreductase (complex I, CI), resulting in different assemblies (supercomplexes SCI(1)III(2) and SCI(2)III(4)). It depends on heme b as a cofactor.

It localises to the mitochondrion inner membrane. Functionally, component of the ubiquinol-cytochrome c oxidoreductase, a multisubunit transmembrane complex that is part of the mitochondrial electron transport chain which drives oxidative phosphorylation. The respiratory chain contains 3 multisubunit complexes succinate dehydrogenase (complex II, CII), ubiquinol-cytochrome c oxidoreductase (cytochrome b-c1 complex, complex III, CIII) and cytochrome c oxidase (complex IV, CIV), that cooperate to transfer electrons derived from NADH and succinate to molecular oxygen, creating an electrochemical gradient over the inner membrane that drives transmembrane transport and the ATP synthase. The cytochrome b-c1 complex catalyzes electron transfer from ubiquinol to cytochrome c, linking this redox reaction to translocation of protons across the mitochondrial inner membrane, with protons being carried across the membrane as hydrogens on the quinol. In the process called Q cycle, 2 protons are consumed from the matrix, 4 protons are released into the intermembrane space and 2 electrons are passed to cytochrome c. Cytochrome b is a catalytic core subunit containing 2 b-type hemes BL and BH topographically segregated in the quinone reduction (Qi) and quinol oxidation (Q0) sites on opposite sides of the membrane. This is Cytochrome b (MT-CYB) from Arabidopsis thaliana (Mouse-ear cress).